A 285-amino-acid polypeptide reads, in one-letter code: AT-hook motif nuclear-localized protein 21 (285 aa).

Positions 17–95 are disordered; sequence DGGGGGQFTT…GSKNKPKPPV (79 aa). Basic residues predominate over residues 39 to 50; sequence NHHHHHHNHNHH. Positions 63-73 are enriched in gly residues; the sequence is GLGGGGGGGSG. The a.T hook DNA-binding region spans 78-90; sequence RRPRGRPAGSKNK. In terms of domain architecture, PPC spans 102 to 238; sequence ANTLRAHILE…EHEEHLQSGG (137 aa).

Preferentially expressed in roots, but also in flowers and leaves. Detected in the inflorescence meristem, floral primordia and developing reproductive organs.

It localises to the nucleus. The protein resides in the nucleoplasm. Functionally, transcription factor that specifically binds AT-rich DNA sequences related to the nuclear matrix attachment regions (MARs). Binds to the MARs present in the ETTIN (ETT) promoter leading to a negative regulation of its gene expression. Functions as a molecular node downstream of the homeotic protein AGAMOUS (AG), regulating patterning and differentiation of reproductive organs. Acts as a chromatin remodeling factor that modifies the architecture of ETTIN (ETT) chromatin by modulating H3 methylation leading to the regulation of ETT expression. Seems to be involved in the regulation of a set of reproductives genes including CRABS CLAW (CRC), JAGGED (JAG) and KNUCKLES (KNU). The chain is AT-hook motif nuclear-localized protein 21 from Arabidopsis thaliana (Mouse-ear cress).